The following is a 305-amino-acid chain: Undecaprenyl-diphosphatase (305 aa).

The next 8 helical transmembrane spans lie at 18 to 38, 55 to 75, 103 to 123, 130 to 150, 187 to 207, 225 to 245, 246 to 266, and 284 to 304; these read GVTE…PALV, YLAF…VFFW, WLIV…EQLF, PVPA…GEVL, GVLI…RSGI, FSFL…IPEL, FGPL…ASFV, and LTPF…WLAL.

Belongs to the UppP family.

It localises to the cell membrane. It carries out the reaction di-trans,octa-cis-undecaprenyl diphosphate + H2O = di-trans,octa-cis-undecaprenyl phosphate + phosphate + H(+). Its function is as follows. Catalyzes the dephosphorylation of undecaprenyl diphosphate (UPP). Confers resistance to bacitracin. This is Undecaprenyl-diphosphatase from Mycobacterium avium (strain 104).